The sequence spans 551 residues: Chaperonin GroEL (551 aa).

ATP-binding positions include 30–33, lysine 51, 87–91, glycine 415, and aspartate 496; these read TLGP and DGTTT.

The protein belongs to the chaperonin (HSP60) family. Forms a cylinder of 14 subunits composed of two heptameric rings stacked back-to-back. Interacts with the co-chaperonin GroES.

It is found in the cytoplasm. The enzyme catalyses ATP + H2O + a folded polypeptide = ADP + phosphate + an unfolded polypeptide.. Its function is as follows. Together with its co-chaperonin GroES, plays an essential role in assisting protein folding. The GroEL-GroES system forms a nano-cage that allows encapsulation of the non-native substrate proteins and provides a physical environment optimized to promote and accelerate protein folding. In Maricaulis maris (strain MCS10) (Caulobacter maris), this protein is Chaperonin GroEL.